A 707-amino-acid chain; its full sequence is Protein kinase C-like 1B (707 aa).

Positions 1–114 constitute a C2 domain; the sequence is MLFTGTVRVR…KIGSANDIWV (114 aa). Phorbol-ester/DAG-type zinc fingers lie at residues 170-220 and 248-298; these read GHKF…VWKC and PHRF…ANNC. Residues 323 to 368 form a disordered region; that stretch reads SKKKPSIMTDTSTDISGSSNSENSGYLQQISEDDSGTTSSRSASKV. Residues 330–365 show a composition bias toward polar residues; the sequence is MTDTSTDISGSSNSENSGYLQQISEDDSGTTSSRSA. A Protein kinase domain is found at 378–638; that stretch reads FTFMKVLGKG…EDAIRAHPFF (261 aa). Residues 384–392 and lysine 407 each bind ATP; that span reads LGKGSFGKV. Aspartate 502 acts as the Proton acceptor in catalysis. An AGC-kinase C-terminal domain is found at 639 to 707; it reads REIDWDALES…FSFINPHFTY (69 aa).

This sequence belongs to the protein kinase superfamily. AGC Ser/Thr protein kinase family. PKC subfamily. As to expression, expressed selectively in neurons that receive, transmit and process environmental signals.

The protein localises to the membrane. It is found in the cytoplasm. It localises to the cytoskeleton. The enzyme catalyses L-seryl-[protein] + ATP = O-phospho-L-seryl-[protein] + ADP + H(+). It catalyses the reaction L-threonyl-[protein] + ATP = O-phospho-L-threonyl-[protein] + ADP + H(+). Functionally, PKC is activated by diacylglycerol which in turn phosphorylates a range of cellular proteins. PKC also serves as the receptor for phorbol esters, a class of tumor promoters. Involved in neuropeptide secretion in motor axons. Likely to act via the extracellular signal-regulated kinase/mitogen-activated protein kinase (ERK/MAPK) pathway in the signaling response to various sensory neurons; temperature, odor, taste, and osmolality. Its role in regulation differs depending on the neuron in which it is acting; thermosensation in AFD neurons, osmolality in ASH neurons, olfactory perception in AWA and AWC neurons. Promotes dauer formation mediated by the insulin/IGF pathway. Required for resistance to antimitotic toxins. This Caenorhabditis elegans protein is Protein kinase C-like 1B.